The sequence spans 177 residues: Parathyroid hormone-related protein (177 aa).

A signal peptide spans 1-24; that stretch reads MLRRLVQQWSVLVFLLSYSVPSRG. Positions 25–34 are excised as a propeptide; that stretch reads RSVEGLGRRL. The important for receptor binding stretch occupies residues 57 to 68; sequence RFFLHHLIAEIH. Residues 74–177 form a disordered region; that stretch reads ATSEVSPNSK…TSLEPSSRTH (104 aa). Residues 76-90 show a composition bias toward polar residues; sequence SEVSPNSKPAPNTKN. Positions 108 to 129 match the Nuclear localization signal motif; sequence TNKVETYKEQPLKTPGKKKKGK. Residues 109-118 show a composition bias toward basic and acidic residues; sequence NKVETYKEQP. The span at 122 to 132 shows a compositional bias: basic residues; sequence PGKKKKGKPGK. A compositionally biased stretch (low complexity) spans 161-177; sequence PHTSPTSTSLEPSSRTH.

It belongs to the parathyroid hormone family. In terms of assembly, PTHrP interacts with PTH1R (via N-terminal extracellular domain). There are several secretory forms, including osteostatin, arising from endoproteolytic cleavage of the initial translation product. Each of these secretory forms is believed to have one or more of its own receptors that mediates the normal paracrine, autocrine and endocrine actions.

Its subcellular location is the secreted. It localises to the cytoplasm. It is found in the nucleus. Functionally, neuroendocrine peptide which is a critical regulator of cellular and organ growth, development, migration, differentiation and survival and of epithelial calcium ion transport. Acts by binding to its receptor, PTH1R, activating G protein-coupled receptor signaling. Regulates endochondral bone development and epithelial-mesenchymal interactions during the formation of the mammary glands and teeth. Required for skeletal homeostasis. Promotes mammary mesenchyme differentiation and bud outgrowth by modulating mesenchymal cell responsiveness to BMPs. Up-regulates BMPR1A expression in the mammary mesenchyme and this increases the sensitivity of these cells to BMPs and allows them to respond to BMP4 in a paracrine and/or autocrine fashion. BMP4 signaling in the mesenchyme, in turn, triggers epithelial outgrowth and augments MSX2 expression, which causes the mammary mesenchyme to inhibit hair follicle formation within the nipple sheath. Its function is as follows. Potent inhibitor of osteoclastic bone resorption. This is Parathyroid hormone-related protein (Pthlh) from Rattus norvegicus (Rat).